Reading from the N-terminus, the 448-residue chain is UDP-N-acetylmuramoylalanine--D-glutamate ligase (448 aa).

Residue 116 to 122 participates in ATP binding; it reads GSNAKST.

It belongs to the MurCDEF family.

The protein localises to the cytoplasm. The catalysed reaction is UDP-N-acetyl-alpha-D-muramoyl-L-alanine + D-glutamate + ATP = UDP-N-acetyl-alpha-D-muramoyl-L-alanyl-D-glutamate + ADP + phosphate + H(+). The protein operates within cell wall biogenesis; peptidoglycan biosynthesis. Functionally, cell wall formation. Catalyzes the addition of glutamate to the nucleotide precursor UDP-N-acetylmuramoyl-L-alanine (UMA). This chain is UDP-N-acetylmuramoylalanine--D-glutamate ligase, found in Pseudomonas fluorescens (strain ATCC BAA-477 / NRRL B-23932 / Pf-5).